A 247-amino-acid polypeptide reads, in one-letter code: 3-deoxy-manno-octulosonate cytidylyltransferase (247 aa).

Belongs to the KdsB family.

It is found in the cytoplasm. It catalyses the reaction 3-deoxy-alpha-D-manno-oct-2-ulosonate + CTP = CMP-3-deoxy-beta-D-manno-octulosonate + diphosphate. It participates in nucleotide-sugar biosynthesis; CMP-3-deoxy-D-manno-octulosonate biosynthesis; CMP-3-deoxy-D-manno-octulosonate from 3-deoxy-D-manno-octulosonate and CTP: step 1/1. The protein operates within bacterial outer membrane biogenesis; lipopolysaccharide biosynthesis. Functionally, activates KDO (a required 8-carbon sugar) for incorporation into bacterial lipopolysaccharide in Gram-negative bacteria. This chain is 3-deoxy-manno-octulosonate cytidylyltransferase, found in Rhodopseudomonas palustris (strain BisA53).